A 167-amino-acid polypeptide reads, in one-letter code: uncharacterized protein (167 aa).

Residues 148–167 (NKESRGENDGGEERESANIY) form a disordered region.

This is an uncharacterized protein from Homo sapiens (Human).